The primary structure comprises 531 residues: Probable protein phosphatase 2C 66 (531 aa).

Residues 1-47 (MGSCLSSDLPPRAGAGAGASPGWPQRWRRRRQRGVERGGAVSGGGGG) are disordered. Residues 10-25 (PPRAGAGAGASPGWPQ) show a composition bias toward low complexity. A PPM-type phosphatase domain is found at 88-401 (AACLHTQQGR…DDCAVVCLFL (314 aa)). D123 and G124 together coordinate Mn(2+). Polar residues predominate over residues 151–172 (SANEDTSSHQNGSISGSVNSEE). A disordered region spans residues 151-176 (SANEDTSSHQNGSISGSVNSEESPVV). Mn(2+) contacts are provided by D346 and D392.

Belongs to the PP2C family. Mg(2+) is required as a cofactor. It depends on Mn(2+) as a cofactor.

The enzyme catalyses O-phospho-L-seryl-[protein] + H2O = L-seryl-[protein] + phosphate. The catalysed reaction is O-phospho-L-threonyl-[protein] + H2O = L-threonyl-[protein] + phosphate. This is Probable protein phosphatase 2C 66 from Oryza sativa subsp. japonica (Rice).